We begin with the raw amino-acid sequence, 333 residues long: 5-formaminoimidazole-4-carboxamide-1-(beta)-D-ribofuranosyl 5'-monophosphate synthetase (333 aa).

2 residues coordinate 5-amino-1-(5-phospho-beta-D-ribosyl)imidazole-4-carboxamide: H10 and S74. The ATP-grasp domain occupies 95 to 324; the sequence is RNLFAWESNQ…ISREIRLALN (230 aa). ATP-binding positions include 125 to 185 and E207; that span reads VEDV…VPMY. N230 contacts 5-amino-1-(5-phospho-beta-D-ribosyl)imidazole-4-carboxamide. Residues E269 and E282 each contribute to the Mg(2+) site.

Belongs to the phosphohexose mutase family. The cofactor is Mg(2+). Mn(2+) is required as a cofactor.

The enzyme catalyses 5-amino-1-(5-phospho-beta-D-ribosyl)imidazole-4-carboxamide + formate + ATP = 5-formamido-1-(5-phospho-D-ribosyl)imidazole-4-carboxamide + ADP + phosphate. Its pathway is purine metabolism; IMP biosynthesis via de novo pathway; 5-formamido-1-(5-phospho-D-ribosyl)imidazole-4-carboxamide from 5-amino-1-(5-phospho-D-ribosyl)imidazole-4-carboxamide (formate route): step 1/1. Catalyzes the ATP- and formate-dependent formylation of 5-aminoimidazole-4-carboxamide-1-beta-d-ribofuranosyl 5'-monophosphate (AICAR) to 5-formaminoimidazole-4-carboxamide-1-beta-d-ribofuranosyl 5'-monophosphate (FAICAR) in the absence of folates. This Sulfolobus acidocaldarius (strain ATCC 33909 / DSM 639 / JCM 8929 / NBRC 15157 / NCIMB 11770) protein is 5-formaminoimidazole-4-carboxamide-1-(beta)-D-ribofuranosyl 5'-monophosphate synthetase.